The primary structure comprises 162 residues: Nucleotide-binding protein Francci3_0558 (162 aa).

This sequence belongs to the YajQ family.

In terms of biological role, nucleotide-binding protein. The sequence is that of Nucleotide-binding protein Francci3_0558 from Frankia casuarinae (strain DSM 45818 / CECT 9043 / HFP020203 / CcI3).